Here is a 388-residue protein sequence, read N- to C-terminus: 4-hydroxy-3-methylbut-2-en-1-yl diphosphate synthase (flavodoxin) (388 aa).

[4Fe-4S] cluster is bound by residues C280, C283, C315, and E322. The disordered stretch occupies residues 369–388; sequence MNSEGGPEATSSGSPVVTVS. Positions 377–388 are enriched in polar residues; the sequence is ATSSGSPVVTVS.

Belongs to the IspG family. [4Fe-4S] cluster serves as cofactor.

The catalysed reaction is (2E)-4-hydroxy-3-methylbut-2-enyl diphosphate + oxidized [flavodoxin] + H2O + 2 H(+) = 2-C-methyl-D-erythritol 2,4-cyclic diphosphate + reduced [flavodoxin]. It participates in isoprenoid biosynthesis; isopentenyl diphosphate biosynthesis via DXP pathway; isopentenyl diphosphate from 1-deoxy-D-xylulose 5-phosphate: step 5/6. Its function is as follows. Converts 2C-methyl-D-erythritol 2,4-cyclodiphosphate (ME-2,4cPP) into 1-hydroxy-2-methyl-2-(E)-butenyl 4-diphosphate. The chain is 4-hydroxy-3-methylbut-2-en-1-yl diphosphate synthase (flavodoxin) from Mycolicibacterium paratuberculosis (strain ATCC BAA-968 / K-10) (Mycobacterium paratuberculosis).